A 329-amino-acid chain; its full sequence is Phenylalanine--tRNA ligase alpha subunit (329 aa).

Glu254 is a binding site for Mg(2+).

This sequence belongs to the class-II aminoacyl-tRNA synthetase family. Phe-tRNA synthetase alpha subunit type 1 subfamily. Tetramer of two alpha and two beta subunits. The cofactor is Mg(2+).

The protein localises to the cytoplasm. It carries out the reaction tRNA(Phe) + L-phenylalanine + ATP = L-phenylalanyl-tRNA(Phe) + AMP + diphosphate + H(+). This is Phenylalanine--tRNA ligase alpha subunit from Histophilus somni (strain 129Pt) (Haemophilus somnus).